The following is a 364-amino-acid chain: MSTTYNFCAGPAMLPQAVMKKAQSELLDWNGLGTSVMEISHRSKEFIALTDKAETDLRELMSIPENYHVLFMHGGGRGQFSAVVNNFLGENGKALYLVSGSWSKSAVDEARKLTSDAQIDTLDLVVNDNGIGAVSIPELTGEAADYRYLHYCPNETVDGIEIFEDINSPWPIVADMSSNIMSREIDVSKFGLIYAGAQKNIGPSGLSIVIVRDDMLELPSLPQSSIMDYRLAVKHGSMYNTPPTFAWYLAAEVFKWLKSSGGVATMAEVNAKKAQLLYDFIDGSNFYNNTVSAQNRSLMNVIFYLANEDNNADFLAEASRAGLVALKGHRSVGGMRASIYNAMPIEGVEKLVEFMKGFAEKNNG.

Arg42 contacts L-glutamate. Residues 76–77 (GR), Trp102, Thr156, Asp175, and Gln198 contribute to the pyridoxal 5'-phosphate site. N6-(pyridoxal phosphate)lysine is present on Lys199. 240–241 (NT) contributes to the pyridoxal 5'-phosphate binding site.

Belongs to the class-V pyridoxal-phosphate-dependent aminotransferase family. SerC subfamily. Homodimer. Pyridoxal 5'-phosphate is required as a cofactor.

The protein resides in the cytoplasm. It catalyses the reaction O-phospho-L-serine + 2-oxoglutarate = 3-phosphooxypyruvate + L-glutamate. It carries out the reaction 4-(phosphooxy)-L-threonine + 2-oxoglutarate = (R)-3-hydroxy-2-oxo-4-phosphooxybutanoate + L-glutamate. It functions in the pathway amino-acid biosynthesis; L-serine biosynthesis; L-serine from 3-phospho-D-glycerate: step 2/3. The protein operates within cofactor biosynthesis; pyridoxine 5'-phosphate biosynthesis; pyridoxine 5'-phosphate from D-erythrose 4-phosphate: step 3/5. In terms of biological role, catalyzes the reversible conversion of 3-phosphohydroxypyruvate to phosphoserine and of 3-hydroxy-2-oxo-4-phosphonooxybutanoate to phosphohydroxythreonine. This chain is Phosphoserine aminotransferase, found in Shewanella sediminis (strain HAW-EB3).